Here is a 339-residue protein sequence, read N- to C-terminus: MSLLEKFERYPLTFGPTPIEHLPRLTAALGGKVDIYAKRDDCNSGLAMGGNKLRKLEYIVPDAIASGADTLVSIGGVQSNHTRMVAATAAKIGMKCVVIQEKWVPHYDAVYDRVGNILMTKLMGADSRLVEDGFDIGIRKSWEDAIQSVEDAGGKPYAIPAGASVHKFGGLGYVGFAEEVAAQEKDLGFIFDYIIVCVVTGSTQGGMIVGFAALDRADRVIGIDASGTLQQTRDQVRKIVDATSELVNLGRSVREDEIVINPDYAYPAYGVPSEETNEAIRLAARTEAMITDPVYEGKSMQGMIDLARKGFFPEGSKVLYAHLGGAPALNGYSYYYKDG.

Lysine 52 bears the N6-(pyridoxal phosphate)lysine mark. Serine 79 serves as the catalytic Nucleophile.

The protein belongs to the ACC deaminase/D-cysteine desulfhydrase family. Homotrimer. The cofactor is pyridoxal 5'-phosphate.

It carries out the reaction 1-aminocyclopropane-1-carboxylate + H2O = 2-oxobutanoate + NH4(+). In terms of biological role, catalyzes a cyclopropane ring-opening reaction, the irreversible conversion of 1-aminocyclopropane-1-carboxylate (ACC) to ammonia and alpha-ketobutyrate. Allows growth on ACC as a nitrogen source. The protein is 1-aminocyclopropane-1-carboxylate deaminase of Rhizobium leguminosarum bv. viciae.